The primary structure comprises 190 residues: dCTP deaminase, dUMP-forming (190 aa).

Residues Lys-101 to Arg-106, Asp-119, Thr-127 to Glu-129, Gln-148, Tyr-162, and Gln-174 contribute to the dCTP site. The active-site Proton donor/acceptor is Glu-129. The interval Tyr-162–Thr-190 is disordered. Residues Ser-166–Thr-190 are compositionally biased toward polar residues.

This sequence belongs to the dCTP deaminase family. In terms of assembly, homotrimer.

It catalyses the reaction dCTP + 2 H2O = dUMP + NH4(+) + diphosphate. Its pathway is pyrimidine metabolism; dUMP biosynthesis; dUMP from dCTP: step 1/1. Its function is as follows. Bifunctional enzyme that catalyzes both the deamination of dCTP to dUTP and the hydrolysis of dUTP to dUMP without releasing the toxic dUTP intermediate. The sequence is that of dCTP deaminase, dUMP-forming from Mycobacterium leprae (strain Br4923).